A 407-amino-acid chain; its full sequence is Nicotinate phosphoribosyltransferase (407 aa).

H228 bears the Phosphohistidine; by autocatalysis mark.

The protein belongs to the NAPRTase family. Transiently phosphorylated on a His residue during the reaction cycle. Phosphorylation strongly increases the affinity for substrates and increases the rate of nicotinate D-ribonucleotide production. Dephosphorylation regenerates the low-affinity form of the enzyme, leading to product release.

The enzyme catalyses nicotinate + 5-phospho-alpha-D-ribose 1-diphosphate + ATP + H2O = nicotinate beta-D-ribonucleotide + ADP + phosphate + diphosphate. It functions in the pathway cofactor biosynthesis; NAD(+) biosynthesis; nicotinate D-ribonucleotide from nicotinate: step 1/1. With respect to regulation, 100-fold more active in the presence of saturating ATP. Functionally, catalyzes the synthesis of beta-nicotinate D-ribonucleotide from nicotinate and 5-phospho-D-ribose 1-phosphate at the expense of ATP. Functions in the deamidating salvage pathway for production of NAD from nicotinamide. Displays a strict preference for nicotinate over nicotinamide substrate. The polypeptide is Nicotinate phosphoribosyltransferase (Acinetobacter baylyi (strain ATCC 33305 / BD413 / ADP1)).